A 141-amino-acid polypeptide reads, in one-letter code: Cystatin (141 aa).

A signal peptide spans 1 to 26 (MVHSQLPVAAPLRLLCALLLLPSATM). One can recognise a Cystatin domain in the interval 29 to 129 (GGLSPRSVTD…CHFQVWSRPW (101 aa)). The short motif at 73 to 77 (QVVAG) is the Secondary area of contact element. Disulfide bonds link C91/C107 and C120/C140.

This sequence belongs to the cystatin family. Expressed at a low level by the venom gland (at protein level).

Its subcellular location is the secreted. Functionally, inhibits various C1 cysteine proteases including cathepsin L, papain and cathepsin B. This protein has no toxic activity and its function in the venom is unknown. It may play a role as a housekeeping or regulatory protein. The polypeptide is Cystatin (Oxyuranus scutellatus scutellatus (Australian taipan)).